The sequence spans 246 residues: 3-deoxy-manno-octulosonate cytidylyltransferase (246 aa).

It belongs to the KdsB family.

It localises to the cytoplasm. The enzyme catalyses 3-deoxy-alpha-D-manno-oct-2-ulosonate + CTP = CMP-3-deoxy-beta-D-manno-octulosonate + diphosphate. It functions in the pathway nucleotide-sugar biosynthesis; CMP-3-deoxy-D-manno-octulosonate biosynthesis; CMP-3-deoxy-D-manno-octulosonate from 3-deoxy-D-manno-octulosonate and CTP: step 1/1. It participates in bacterial outer membrane biogenesis; lipopolysaccharide biosynthesis. Activates KDO (a required 8-carbon sugar) for incorporation into bacterial lipopolysaccharide in Gram-negative bacteria. This is 3-deoxy-manno-octulosonate cytidylyltransferase from Bradyrhizobium sp. (strain ORS 278).